Reading from the N-terminus, the 116-residue chain is Non-specific lipid transfer protein GPI-anchored 17 (116 aa).

The signal sequence occupies residues 1–24; that stretch reads MKIGVVLVLLTVFVVVMSSTSVSA. 3 disulfides stabilise this stretch: cysteine 31/cysteine 74, cysteine 42/cysteine 58, and cysteine 59/cysteine 99. Asparagine 107 carries the GPI-anchor amidated asparagine lipid modification. Residues 108-116 constitute a propeptide, removed in mature form; the sequence is GKNFKNTSL. An N-linked (GlcNAc...) asparagine glycan is attached at asparagine 113.

The protein belongs to the plant LTP family. In terms of tissue distribution, expressed in seedlings, preferentially in roots.

Its subcellular location is the cell membrane. Probable lipid transfer protein. The polypeptide is Non-specific lipid transfer protein GPI-anchored 17 (Arabidopsis thaliana (Mouse-ear cress)).